Consider the following 217-residue polypeptide: Peptide methionine sulfoxide reductase MsrA (217 aa).

The active site involves Cys-54.

It belongs to the MsrA Met sulfoxide reductase family.

It carries out the reaction L-methionyl-[protein] + [thioredoxin]-disulfide + H2O = L-methionyl-(S)-S-oxide-[protein] + [thioredoxin]-dithiol. The enzyme catalyses [thioredoxin]-disulfide + L-methionine + H2O = L-methionine (S)-S-oxide + [thioredoxin]-dithiol. In terms of biological role, has an important function as a repair enzyme for proteins that have been inactivated by oxidation. Catalyzes the reversible oxidation-reduction of methionine sulfoxide in proteins to methionine. The sequence is that of Peptide methionine sulfoxide reductase MsrA from Maricaulis maris (strain MCS10) (Caulobacter maris).